The following is a 441-amino-acid chain: Homoserine dehydrogenase (441 aa).

Residues Asn17 and Val18 each coordinate NADP(+). NAD(+) is bound by residues Val18, Val37, and Gly47. Val18 lines the NADPH pocket. NADP(+)-binding residues include Arg49, Arg50, and Lys107. Position 49 (Arg49) interacts with NADPH. Lys107 serves as a coordination point for NADPH. Na(+) contacts are provided by Glu131, Val134, Gly136, and Ile138. NADP(+) is bound by residues Gly189 and Glu192. Positions 192 and 203 each coordinate L-homoserine. Residue Lys207 is the Proton donor of the active site. Gly309 lines the NADP(+) pocket. NAD(+) is bound at residue Gly309. Residue Gly309 participates in NADPH binding. Positions 356–435 (YVSMNVADKP…VVQGVSSVIR (80 aa)) constitute an ACT domain.

Belongs to the homoserine dehydrogenase family. The cofactor is a metal cation.

It catalyses the reaction L-homoserine + NADP(+) = L-aspartate 4-semialdehyde + NADPH + H(+). It carries out the reaction L-homoserine + NAD(+) = L-aspartate 4-semialdehyde + NADH + H(+). It functions in the pathway amino-acid biosynthesis; L-methionine biosynthesis via de novo pathway; L-homoserine from L-aspartate: step 3/3. The protein operates within amino-acid biosynthesis; L-threonine biosynthesis; L-threonine from L-aspartate: step 3/5. Functionally, catalyzes the conversion of L-aspartate-beta-semialdehyde (L-Asa) to L-homoserine (L-Hse), the third step in the biosynthesis of threonine and methionine from aspartate. This chain is Homoserine dehydrogenase (hom), found in Mycobacterium tuberculosis (strain CDC 1551 / Oshkosh).